Here is a 358-residue protein sequence, read N- to C-terminus: Protein PXR1 (358 aa).

Disordered stretches follow at residues 1 to 26 (MGLA…NNTS) and 146 to 342 (EVKT…KSAT). Positions 11 to 26 (KISNDPQNTTWANNTS) are enriched in polar residues. One can recognise a G-patch domain in the interval 25–79 (TSRFGHRILTSQGWQPGDSLGASDAAHAAHYTVASQSHIRVLLKDDNLGLGAKRG). Composition is skewed to basic and acidic residues over residues 146 to 171 (EVKT…EDDR) and 199 to 217 (SMDL…SSKD). Residues 218–227 (KKGKKSKKDK) show a composition bias toward basic residues. Residues 287 to 299 (DVEDLSSESEDES) show a composition bias toward acidic residues. Polar residues predominate over residues 300 to 315 (TPSASRPATGTSTPTV). Basic residues predominate over residues 328–339 (HSVRQKWIRSKK).

Belongs to the PINX1 family.

It localises to the nucleus. Its subcellular location is the nucleolus. In terms of biological role, involved in rRNA-processing at A0, A1 and A2 sites and negatively regulates telomerase. The sequence is that of Protein PXR1 (PXR1) from Phaeosphaeria nodorum (strain SN15 / ATCC MYA-4574 / FGSC 10173) (Glume blotch fungus).